Reading from the N-terminus, the 146-residue chain is D-aminoacyl-tRNA deacylase (146 aa).

The Gly-cisPro motif, important for rejection of L-amino acids motif lies at 137–138; the sequence is GP.

This sequence belongs to the DTD family. Homodimer.

The protein localises to the cytoplasm. The enzyme catalyses glycyl-tRNA(Ala) + H2O = tRNA(Ala) + glycine + H(+). It carries out the reaction a D-aminoacyl-tRNA + H2O = a tRNA + a D-alpha-amino acid + H(+). Its function is as follows. An aminoacyl-tRNA editing enzyme that deacylates mischarged D-aminoacyl-tRNAs. Also deacylates mischarged glycyl-tRNA(Ala), protecting cells against glycine mischarging by AlaRS. Acts via tRNA-based rather than protein-based catalysis; rejects L-amino acids rather than detecting D-amino acids in the active site. By recycling D-aminoacyl-tRNA to D-amino acids and free tRNA molecules, this enzyme counteracts the toxicity associated with the formation of D-aminoacyl-tRNA entities in vivo and helps enforce protein L-homochirality. The polypeptide is D-aminoacyl-tRNA deacylase (Bacillus cereus (strain Q1)).